Here is a 271-residue protein sequence, read N- to C-terminus: ATP synthase subunit a (271 aa).

5 helical membrane-spanning segments follow: residues 38–58, 100–120, 146–166, 220–240, and 242–262; these read FWTLNIDSMFFSVVLGLLFLA, LIAPLALTVFVWVFLMNLMDL, DVNITLSMALGVFILILFYSI, LIFILIAGLLPWWSQWILNVP, and AIFHILIITLQAFIFMVLTIV.

The protein belongs to the ATPase A chain family. F-type ATPases have 2 components, CF(1) - the catalytic core - and CF(0) - the membrane proton channel. CF(1) has five subunits: alpha(3), beta(3), gamma(1), delta(1), epsilon(1). CF(0) has three main subunits: a(1), b(2) and c(9-12). The alpha and beta chains form an alternating ring which encloses part of the gamma chain. CF(1) is attached to CF(0) by a central stalk formed by the gamma and epsilon chains, while a peripheral stalk is formed by the delta and b chains.

Its subcellular location is the cell inner membrane. Its function is as follows. Key component of the proton channel; it plays a direct role in the translocation of protons across the membrane. This is ATP synthase subunit a from Enterobacter sp. (strain 638).